We begin with the raw amino-acid sequence, 325 residues long: UPF0285 protein MmarC7_1666 (325 aa).

This sequence belongs to the UPF0285 family.

The sequence is that of UPF0285 protein MmarC7_1666 from Methanococcus maripaludis (strain C7 / ATCC BAA-1331).